Consider the following 432-residue polypeptide: Glutamyl-tRNA reductase (432 aa).

Substrate contacts are provided by residues 49–52, Ser101, 106–108, and Gln112; these read TCNR and ESQ. Catalysis depends on Cys50, which acts as the Nucleophile. 181–186 provides a ligand contact to NADP(+); that stretch reads GTGETI. The segment at 410–432 is disordered; the sequence is KPGYHHPTLQTTIVKTDETDPAS.

This sequence belongs to the glutamyl-tRNA reductase family. As to quaternary structure, homodimer.

It catalyses the reaction (S)-4-amino-5-oxopentanoate + tRNA(Glu) + NADP(+) = L-glutamyl-tRNA(Glu) + NADPH + H(+). It participates in porphyrin-containing compound metabolism; protoporphyrin-IX biosynthesis; 5-aminolevulinate from L-glutamyl-tRNA(Glu): step 1/2. Functionally, catalyzes the NADPH-dependent reduction of glutamyl-tRNA(Glu) to glutamate 1-semialdehyde (GSA). The chain is Glutamyl-tRNA reductase from Xylella fastidiosa (strain 9a5c).